A 242-amino-acid chain; its full sequence is 1-(5-phosphoribosyl)-5-[(5-phosphoribosylamino)methylideneamino] imidazole-4-carboxamide isomerase (242 aa).

The active-site Proton acceptor is the Asp-8. Asp-129 serves as the catalytic Proton donor.

This sequence belongs to the HisA/HisF family.

It localises to the cytoplasm. It carries out the reaction 1-(5-phospho-beta-D-ribosyl)-5-[(5-phospho-beta-D-ribosylamino)methylideneamino]imidazole-4-carboxamide = 5-[(5-phospho-1-deoxy-D-ribulos-1-ylimino)methylamino]-1-(5-phospho-beta-D-ribosyl)imidazole-4-carboxamide. It participates in amino-acid biosynthesis; L-histidine biosynthesis; L-histidine from 5-phospho-alpha-D-ribose 1-diphosphate: step 4/9. This is 1-(5-phosphoribosyl)-5-[(5-phosphoribosylamino)methylideneamino] imidazole-4-carboxamide isomerase from Clostridium botulinum (strain Okra / Type B1).